The primary structure comprises 514 residues: Flagellin B (514 aa).

The protein belongs to the bacterial flagellin family. As to quaternary structure, heteromer of FlaA and FlaB. FlaB is located proximal to the hook while the remainder of the filament is composed of the predominant FlaA.

It is found in the secreted. The protein localises to the bacterial flagellum. In terms of biological role, flagellin is the subunit protein which polymerizes to form the filaments of bacterial flagella. Important for motility and virulence. In Helicobacter pylori (strain J99 / ATCC 700824) (Campylobacter pylori J99), this protein is Flagellin B (flaB).